Consider the following 276-residue polypeptide: Aspartate dehydrogenase domain-containing protein (276 aa).

This sequence belongs to the L-aspartate dehydrogenase family.

The chain is Aspartate dehydrogenase domain-containing protein (aspdh) from Danio rerio (Zebrafish).